We begin with the raw amino-acid sequence, 458 residues long: ATP synthase subunit beta (458 aa).

148–155 (GGAGVGKT) provides a ligand contact to ATP.

The protein belongs to the ATPase alpha/beta chains family. F-type ATPases have 2 components, CF(1) - the catalytic core - and CF(0) - the membrane proton channel. CF(1) has five subunits: alpha(3), beta(3), gamma(1), delta(1), epsilon(1). CF(0) has three main subunits: a(1), b(2) and c(9-12). The alpha and beta chains form an alternating ring which encloses part of the gamma chain. CF(1) is attached to CF(0) by a central stalk formed by the gamma and epsilon chains, while a peripheral stalk is formed by the delta and b chains.

The protein localises to the cell inner membrane. It catalyses the reaction ATP + H2O + 4 H(+)(in) = ADP + phosphate + 5 H(+)(out). Its function is as follows. Produces ATP from ADP in the presence of a proton gradient across the membrane. The catalytic sites are hosted primarily by the beta subunits. This is ATP synthase subunit beta from Stutzerimonas stutzeri (strain A1501) (Pseudomonas stutzeri).